The following is a 406-amino-acid chain: telomere-associated protein 1 (406 aa).

The segment covering 20–40 has biased composition (basic and acidic residues); it reads EHHNGSHDNDDKDKEDKEKQN. Positions 20 to 46 are disordered; that stretch reads EHHNGSHDNDDKDKEDKEKQNTEAVAA. In terms of domain architecture, HTH myb-type spans 147–206; it reads TTRRVRLRWTQEETADLMEGCKVHGVGNWKKILTDPRFRFNNRTAVDLKDRFRTCFPEDY. A DNA-binding region (H-T-H motif) is located at residues 175 to 202; that stretch reads WKKILTDPRFRFNNRTAVDLKDRFRTCF. In terms of domain architecture, Myb-like spans 234 to 288; the sequence is VNRKERRVFTPEEDERLLNGFMKHGPSWSNIQRDNELGLFERRSTDLRDRFRNAF. Residues 368–389 form a disordered region; that stretch reads TQELQPQAHSRKQQGGDGLKEE.

It is found in the nucleus. The protein localises to the chromosome. Its subcellular location is the telomere. Functionally, telomere-binding protein that mediates telomere clustering by promoting formation of head-to-head dimers of DNA molecules through the telomeric tracts. Binds specifically 5'-TTAGTCAGGG-3' repeats in subtelomeric regions. In Yarrowia lipolytica (strain CLIB 122 / E 150) (Yeast), this protein is telomere-associated protein 1.